The following is a 208-amino-acid chain: Small ribosomal subunit protein uS4 (208 aa).

In terms of domain architecture, S4 RNA-binding spans 99 to 165 (RRLDNVVFQL…PRLKEILSSL (67 aa)).

Belongs to the universal ribosomal protein uS4 family. In terms of assembly, part of the 30S ribosomal subunit. Contacts protein S5. The interaction surface between S4 and S5 is involved in control of translational fidelity.

One of the primary rRNA binding proteins, it binds directly to 16S rRNA where it nucleates assembly of the body of the 30S subunit. Functionally, with S5 and S12 plays an important role in translational accuracy. This chain is Small ribosomal subunit protein uS4, found in Desulfitobacterium hafniense (strain DSM 10664 / DCB-2).